The primary structure comprises 180 residues: Shikimate kinase (180 aa).

14 to 19 contacts ATP; it reads GAGKSC. A Mg(2+)-binding site is contributed by serine 18. Substrate-binding residues include aspartate 36, arginine 60, and glycine 82. Arginine 120 contributes to the ATP binding site. Residue arginine 139 participates in substrate binding.

The protein belongs to the shikimate kinase family. As to quaternary structure, monomer. Mg(2+) serves as cofactor.

The protein resides in the cytoplasm. It carries out the reaction shikimate + ATP = 3-phosphoshikimate + ADP + H(+). Its pathway is metabolic intermediate biosynthesis; chorismate biosynthesis; chorismate from D-erythrose 4-phosphate and phosphoenolpyruvate: step 5/7. Its function is as follows. Catalyzes the specific phosphorylation of the 3-hydroxyl group of shikimic acid using ATP as a cosubstrate. This is Shikimate kinase from Xanthomonas oryzae pv. oryzae (strain PXO99A).